Consider the following 440-residue polypeptide: Chromosome partition protein MukF (440 aa).

The interval 208–236 (LSETSGTLRELQDTLEAAGDKLQANLLRI) is leucine-zipper.

It belongs to the MukF family. As to quaternary structure, interacts, and probably forms a ternary complex, with MukE and MukB via its C-terminal region. The complex formation is stimulated by calcium or magnesium. It is required for an interaction between MukE and MukB.

The protein localises to the cytoplasm. It is found in the nucleoid. Functionally, involved in chromosome condensation, segregation and cell cycle progression. May participate in facilitating chromosome segregation by condensation DNA from both sides of a centrally located replisome during cell division. Not required for mini-F plasmid partitioning. Probably acts via its interaction with MukB and MukE. Overexpression results in anucleate cells. It has a calcium binding activity. In Shigella boydii serotype 4 (strain Sb227), this protein is Chromosome partition protein MukF.